A 102-amino-acid chain; its full sequence is MNIAEFHQNIDQIWDSIEEQLENQDIDADCERQGAVFTITFENRTQIVINKQEPLLELWLASKLGGFHFSYKNGDWLNYEGKRFWDCLAQACAAHGEEVSFA.

The protein belongs to the frataxin family.

Its function is as follows. Involved in iron-sulfur (Fe-S) cluster assembly. May act as a regulator of Fe-S biogenesis. The protein is Iron-sulfur cluster assembly protein CyaY of Mannheimia succiniciproducens (strain KCTC 0769BP / MBEL55E).